The primary structure comprises 538 residues: CTP synthase (538 aa).

The tract at residues 1–267 is amidoligase domain; it reads MDRAKFIFVT…LTPIARRFNL (267 aa). Serine 15 contacts CTP. Serine 15 contributes to the UTP binding site. Residues 16–21 and aspartate 73 contribute to the ATP site; that span reads SLGKGI. Mg(2+)-binding residues include aspartate 73 and glutamate 141. CTP contacts are provided by residues 148 to 150, 188 to 193, and lysine 224; these read DME and KTKPTQ. UTP-binding positions include 188–193 and lysine 224; that span reads KTKPTQ. The 247-residue stretch at 292–538 folds into the Glutamine amidotransferase type-1 domain; the sequence is KIGFVGKYLS…DFIKSALSKS (247 aa). Glycine 351 is a binding site for L-glutamine. The active-site Nucleophile; for glutamine hydrolysis is cysteine 378. L-glutamine-binding positions include 379–382, glutamate 402, and arginine 469; that span reads LGMQ. Active-site residues include histidine 513 and glutamate 515.

The protein belongs to the CTP synthase family. Homotetramer.

The catalysed reaction is UTP + L-glutamine + ATP + H2O = CTP + L-glutamate + ADP + phosphate + 2 H(+). The enzyme catalyses L-glutamine + H2O = L-glutamate + NH4(+). It carries out the reaction UTP + NH4(+) + ATP = CTP + ADP + phosphate + 2 H(+). Its pathway is pyrimidine metabolism; CTP biosynthesis via de novo pathway; CTP from UDP: step 2/2. With respect to regulation, allosterically activated by GTP, when glutamine is the substrate; GTP has no effect on the reaction when ammonia is the substrate. The allosteric effector GTP functions by stabilizing the protein conformation that binds the tetrahedral intermediate(s) formed during glutamine hydrolysis. Inhibited by the product CTP, via allosteric rather than competitive inhibition. In terms of biological role, catalyzes the ATP-dependent amination of UTP to CTP with either L-glutamine or ammonia as the source of nitrogen. Regulates intracellular CTP levels through interactions with the four ribonucleotide triphosphates. This is CTP synthase from Helicobacter pylori (strain ATCC 700392 / 26695) (Campylobacter pylori).